A 339-amino-acid chain; its full sequence is Glycerol-3-phosphate dehydrogenase [NAD(P)+] (339 aa).

NADPH-binding residues include Ser-31, Trp-32, Arg-52, and Lys-122. The sn-glycerol 3-phosphate site is built by Lys-122 and Gly-152. NADPH is bound at residue Ala-156. The sn-glycerol 3-phosphate site is built by Lys-207, Asp-260, Ser-270, Arg-271, and Asn-272. Residue Lys-207 is the Proton acceptor of the active site. NADPH is bound at residue Arg-271. Glu-293 provides a ligand contact to NADPH.

It belongs to the NAD-dependent glycerol-3-phosphate dehydrogenase family.

The protein localises to the cytoplasm. It catalyses the reaction sn-glycerol 3-phosphate + NAD(+) = dihydroxyacetone phosphate + NADH + H(+). The enzyme catalyses sn-glycerol 3-phosphate + NADP(+) = dihydroxyacetone phosphate + NADPH + H(+). Its pathway is membrane lipid metabolism; glycerophospholipid metabolism. Its function is as follows. Catalyzes the reduction of the glycolytic intermediate dihydroxyacetone phosphate (DHAP) to sn-glycerol 3-phosphate (G3P), the key precursor for phospholipid synthesis. In Tropheryma whipplei (strain Twist) (Whipple's bacillus), this protein is Glycerol-3-phosphate dehydrogenase [NAD(P)+].